The primary structure comprises 135 residues: MKRTRLLNSELSYEISRIGHTASITLCDAGLPIPSGVKRIDLAIEEGYPTFLRTLDAILSELKVEEIVIASEIHDHNQMLFEQMMKLFEAHRMAPKITEVSHVEFKQRTQASEAIVRTGECTPYANVILKSGVVF.

His-20 acts as the Proton donor in catalysis. Substrate contacts are provided by residues Asp-28, His-102, and Tyr-124 to Asn-126.

The protein belongs to the RbsD / FucU family. RbsD subfamily. In terms of assembly, homodecamer.

It is found in the cytoplasm. It carries out the reaction beta-D-ribopyranose = beta-D-ribofuranose. The protein operates within carbohydrate metabolism; D-ribose degradation; D-ribose 5-phosphate from beta-D-ribopyranose: step 1/2. Catalyzes the interconversion of beta-pyran and beta-furan forms of D-ribose. The chain is D-ribose pyranase from Rhodopirellula baltica (strain DSM 10527 / NCIMB 13988 / SH1).